Reading from the N-terminus, the 338-residue chain is Phosphoribosylformylglycinamidine cyclo-ligase (338 aa).

This sequence belongs to the AIR synthase family.

Its subcellular location is the cytoplasm. It catalyses the reaction 2-formamido-N(1)-(5-O-phospho-beta-D-ribosyl)acetamidine + ATP = 5-amino-1-(5-phospho-beta-D-ribosyl)imidazole + ADP + phosphate + H(+). It participates in purine metabolism; IMP biosynthesis via de novo pathway; 5-amino-1-(5-phospho-D-ribosyl)imidazole from N(2)-formyl-N(1)-(5-phospho-D-ribosyl)glycinamide: step 2/2. The chain is Phosphoribosylformylglycinamidine cyclo-ligase from Lactococcus lactis subsp. lactis (strain IL1403) (Streptococcus lactis).